The sequence spans 136 residues: MLAPKKQKFRKAHKGRVASTAKAGTTLAFGSFGLKSIDGWRVTARQIEAGRKAATRCMKRQGRLWIRIFPDVPVSQKPAEVRMGKGKGSPEFFAVRVSPGRIMFEIEGVEENVALRALELASAKLPVRTRIVRRYE.

This sequence belongs to the universal ribosomal protein uL16 family. Part of the 50S ribosomal subunit.

Its function is as follows. Binds 23S rRNA and is also seen to make contacts with the A and possibly P site tRNAs. The polypeptide is Large ribosomal subunit protein uL16 (Rickettsia rickettsii (strain Iowa)).